Here is a 188-residue protein sequence, read N- to C-terminus: uncharacterized protein (188 aa).

Residues 57 to 80 (NDDVAPVAEGPKQERRSPSRNIGR) form a disordered region.

The protein belongs to the transposase 25 family.

This is an uncharacterized protein from Sinorhizobium fredii (strain NBRC 101917 / NGR234).